The following is a 93-amino-acid chain: Large ribosomal subunit protein uL23 (93 aa).

The protein belongs to the universal ribosomal protein uL23 family. In terms of assembly, part of the 50S ribosomal subunit. Contacts protein L29, and trigger factor when it is bound to the ribosome.

Functionally, one of the early assembly proteins it binds 23S rRNA. One of the proteins that surrounds the polypeptide exit tunnel on the outside of the ribosome. Forms the main docking site for trigger factor binding to the ribosome. The protein is Large ribosomal subunit protein uL23 of Nautilia profundicola (strain ATCC BAA-1463 / DSM 18972 / AmH).